The primary structure comprises 344 residues: Ferredoxin--NADP reductase (344 aa).

8 residues coordinate FAD: Ser12, Asp31, Lys39, Tyr43, Val83, Ile118, Asp285, and Ser326.

It belongs to the ferredoxin--NADP reductase type 2 family. Homodimer. Requires FAD as cofactor.

It carries out the reaction 2 reduced [2Fe-2S]-[ferredoxin] + NADP(+) + H(+) = 2 oxidized [2Fe-2S]-[ferredoxin] + NADPH. The chain is Ferredoxin--NADP reductase from Staphylococcus aureus (strain MW2).